The sequence spans 152 residues: MAEGEITTFTALTEKFNLPPGNYKKPKLLYCSNGGHFLRILPDGTVDGTRDRSDQHIQLQLSAESVGEVYIKSTETGQYLAMDTSGLLYGSQTPSEECLFLERLEENHYNTYTSKKHAEKNWFVGLKKNGSCKRGPRTHYGQKAILFLPLPV.

N-acetylalanine is present on Ala-2. The propeptide occupies 2-15 (AEGEITTFTALTEK). Residue Asn-33 participates in heparin binding. A heparin-binding region spans residues 127–143 (KKNGSCKRGPRTHYGQK).

Belongs to the heparin-binding growth factors family. Monomer. Homodimer. Interacts with FGFR1, FGFR2, FGFR3 and FGFR4. Affinity between fibroblast growth factors (FGFs) and their receptors is increased by heparan sulfate glycosaminoglycans that function as coreceptors. Found in a complex with FGFBP1, FGF1 and FGF2. Interacts with FGFBP1. Part of a Cu(2+)-dependent multiprotein aggregate containing FGF1, S100A13 and SYT1. Interacts with SYT1. Interacts with S100A13. Interacts with LRRC59. Interacts with CSNKA, CSNKB and FIBP. While binding with LRRC59, CSNKA and FIBP seem mutually exclusive, CSNKB and FIBP may cooperatively interact with FGF1. Forms a ternary complex with FGFR1 and ITGAV:ITGB3 and induces the recruitment of PTPN11 to the complex. In the nucleus, phosphorylated by PKC/PRKCD.

The protein resides in the secreted. The protein localises to the cytoplasm. It localises to the cell cortex. Its subcellular location is the cytosol. It is found in the nucleus. In terms of biological role, plays an important role in the regulation of cell survival, cell division, angiogenesis, cell differentiation and cell migration. Functions as a potent mitogen in vitro. Acts as a ligand for FGFR1 and integrins. Binds to FGFR1 in the presence of heparin leading to FGFR1 dimerization and activation via sequential autophosphorylation on tyrosine residues which act as docking sites for interacting proteins, leading to the activation of several signaling cascades. Binds to integrin ITGAV:ITGB3. Its binding to integrin, subsequent ternary complex formation with integrin and FGFR1, and the recruitment of PTPN11 to the complex are essential for FGF1 signaling. Induces the phosphorylation and activation of FGFR1, FRS2, MAPK3/ERK1, MAPK1/ERK2 and AKT1. Can induce angiogenesis. In Sus scrofa (Pig), this protein is Fibroblast growth factor 1 (FGF1).